Reading from the N-terminus, the 264-residue chain is Thymidylate synthase (264 aa).

Arg21 is a dUMP binding site. His51 is a (6R)-5,10-methylene-5,6,7,8-tetrahydrofolate binding site. Residue 126–127 (RR) participates in dUMP binding. Cys146 functions as the Nucleophile in the catalytic mechanism. DUMP-binding positions include 166–169 (RSCD), Asn177, and 207–209 (HLY). (6R)-5,10-methylene-5,6,7,8-tetrahydrofolate is bound at residue Asp169. Ala263 lines the (6R)-5,10-methylene-5,6,7,8-tetrahydrofolate pocket.

The protein belongs to the thymidylate synthase family. Bacterial-type ThyA subfamily. In terms of assembly, homodimer.

It localises to the cytoplasm. The catalysed reaction is dUMP + (6R)-5,10-methylene-5,6,7,8-tetrahydrofolate = 7,8-dihydrofolate + dTMP. Its pathway is pyrimidine metabolism; dTTP biosynthesis. Catalyzes the reductive methylation of 2'-deoxyuridine-5'-monophosphate (dUMP) to 2'-deoxythymidine-5'-monophosphate (dTMP) while utilizing 5,10-methylenetetrahydrofolate (mTHF) as the methyl donor and reductant in the reaction, yielding dihydrofolate (DHF) as a by-product. This enzymatic reaction provides an intracellular de novo source of dTMP, an essential precursor for DNA biosynthesis. This Sodalis glossinidius (strain morsitans) protein is Thymidylate synthase.